We begin with the raw amino-acid sequence, 148 residues long: UPF0260 protein mll2411 (148 aa).

Belongs to the UPF0260 family.

This is UPF0260 protein mll2411 from Mesorhizobium japonicum (strain LMG 29417 / CECT 9101 / MAFF 303099) (Mesorhizobium loti (strain MAFF 303099)).